The sequence spans 144 residues: Austinoid biosynthesis clusters protein S (144 aa).

The protein belongs to the trt14 isomerase family. Homodimer.

It participates in secondary metabolite biosynthesis; terpenoid biosynthesis. In terms of biological role, part of the gene cluster B that mediates the biosynthesis of the fungal meroterpenoid acetoxydehydroaustin. The first step of the pathway is the synthesis of 3,5-dimethylorsellinic acid by the polyketide synthase ausA. 3,5-dimethylorsellinic acid is then prenylated by the polyprenyl transferase ausN. Further epoxidation by the FAD-dependent monooxygenase ausM and cyclization by the probable terpene cyclase ausL lead to the formation of protoaustinoid A. Protoaustinoid A is then oxidized to spiro-lactone preaustinoid A3 by the combined action of the FAD-binding monooxygenases ausB and ausC, and the dioxygenase ausE. Acid-catalyzed keto-rearrangement and ring contraction of the tetraketide portion of preaustinoid A3 by ausJ lead to the formation of preaustinoid A4. The aldo-keto reductase ausK, with the help of ausH, is involved in the next step by transforming preaustinoid A4 into isoaustinone which is in turn hydroxylated by the P450 monooxygenase ausI to form austinolide. The cytochrome P450 monooxygenase ausG then modifies austinolide to austinol. Austinol is further acetylated to austin by the O-acetyltransferase ausP, which spontaneously changes to dehydroaustin. The cytochrome P450 monooxygenase then converts dehydroaustin is into 7-dehydrodehydroaustin. The hydroxylation catalyzed by ausR permits the second O-acetyltransferase ausQ to add an additional acetyl group to the molecule, leading to the formation of acetoxydehydroaustin. Due to genetic rearrangements of the clusters and the subsequent loss of some enzymes, the end product of the Penicillium brasilianum austinoid biosynthesis clusters is acetoxydehydroaustin. AusS is necessary for austinoids production and may play a possible function as a regulator. This chain is Austinoid biosynthesis clusters protein S, found in Penicillium brasilianum.